The following is a 1032-amino-acid chain: GPI ethanolamine phosphate transferase 1 (1032 aa).

The Cytoplasmic portion of the chain corresponds to 1–6 (MARLGR). The chain crosses the membrane as a helical span at residues 7–27 (FGFLALAVVFHLIYAYSIFDI). Residues 28–468 (YFVSPIVSGM…LQTYDWLFLR (441 aa)) lie on the Lumenal side of the membrane. N-linked (GlcNAc...) asparagine glycans are attached at residues asparagine 150 and asparagine 435. A helical transmembrane segment spans residues 469-489 (TIITFGYLGWIAYALTTVIDL). The Cytoplasmic segment spans residues 490–500 (HVLHRTSDSKR). The chain crosses the membrane as a helical span at residues 501-521 (TVGSTIFFTSILAALFSVLLY). The Lumenal segment spans residues 522 to 523 (QK). The helical transmembrane segment at 524-544 (SSWQYYVYGAFPIFFWEEVFA) threads the bilayer. Topologically, residues 545–564 (RRKALIAGREILLGHVRSFG) are cytoplasmic. A helical transmembrane segment spans residues 565 to 585 (GYIASGFQLVAFVAVLEALLM). The Lumenal portion of the chain corresponds to 586-596 (RHQVQSYFHRE). Residues 597–617 (IYTVCFVLGSFWPILYGVDFV) traverse the membrane as a helical segment. The Cytoplasmic segment spans residues 618 to 622 (RQNTV). Residues 623–643 (LSATWAVGCSLMSTFTLLPVI) traverse the membrane as a helical segment. Topologically, residues 644–647 (KVEN) are lumenal. Residues 648–668 (INTITYGALLMFFTGLFYLLF) traverse the membrane as a helical segment. The Cytoplasmic segment spans residues 669-688 (EDTILKHSKSSGHAPGAISS). A helical membrane pass occupies residues 689 to 709 (LGSRVIMGMQVGMVLLALIVT). The Lumenal segment spans residues 710–722 (RSSVSSLQAKQGL). A helical membrane pass occupies residues 723 to 743 (PFGNQVVGWFVLVASLVLPFF). The Cytoplasmic portion of the chain corresponds to 744–766 (HRLYPNSHYLHRLMVLFLTFSPT). The helical transmembrane segment at 767–787 (FIILTISYEGLFYFVFCMTLV) threads the bilayer. Topologically, residues 788–841 (TWVRLEHAIYVYTARSSAHYGGNNTVPKKPGLNATAVIDGQEYRYRRLGLADTR) are lumenal. Residues asparagine 810 and asparagine 820 are each glycosylated (N-linked (GlcNAc...) asparagine). Residues 842–862 (VALFFFFLLQSAFFSTGNIAS) traverse the membrane as a helical segment. At 863 to 884 (VSSFSLESVFRLIPVFSPFSQS) the chain is on the cytoplasmic side. A helical membrane pass occupies residues 885–905 (ALLILKLLIPFAIISANLGIL). Residues 906–914 (NRRLEVAPS) are Lumenal-facing. Residues 915-935 (ALFMVVMSISDVMTLNFFYMV) form a helical membrane-spanning segment. The Cytoplasmic segment spans residues 936–951 (RDEGSWLDIGTTISHF). A helical transmembrane segment spans residues 952-972 (LIASFLCTFVAGLEFLSEVFI). Residues 973 to 1032 (SGVDFGPTTKAIGASITKTVGGTAGSDVVDSQSGPEDAANSKKAEGLEGSETIRQNGGSV) are Lumenal-facing. The interval 994–1032 (GTAGSDVVDSQSGPEDAANSKKAEGLEGSETIRQNGGSV) is disordered.

It belongs to the PIGG/PIGN/PIGO family. PIGN subfamily.

The protein resides in the endoplasmic reticulum membrane. It functions in the pathway glycolipid biosynthesis; glycosylphosphatidylinositol-anchor biosynthesis. Functionally, ethanolamine phosphate transferase involved in glycosylphosphatidylinositol-anchor biosynthesis. Transfers ethanolamine phosphate to the first alpha-1,4-linked mannose of the glycosylphosphatidylinositol precursor of GPI-anchor. In Aspergillus fumigatus (strain ATCC MYA-4609 / CBS 101355 / FGSC A1100 / Af293) (Neosartorya fumigata), this protein is GPI ethanolamine phosphate transferase 1 (mcd4).